The primary structure comprises 385 residues: Flap endonuclease 1 (385 aa).

Residues 1–104 (MGILGLSKLI…GELAKRAERR (104 aa)) form an N-domain region. Asp34 serves as a coordination point for Mg(2+). 2 residues coordinate DNA: Arg47 and Arg70. Asp86, Glu158, Glu160, Asp179, and Asp181 together coordinate Mg(2+). The tract at residues 122–253 (GIEKFNRRLV…KRAIELINTY (132 aa)) is I-domain. Glu158 lines the DNA pocket. DNA contacts are provided by Gly231 and Asp233. Asp233 contributes to the Mg(2+) binding site. The segment at 336–344 (TQVRLDSFF) is interaction with PCNA. Residues 346–385 (TLPSTPNATNAAKRKAEEAKKSANNKKAKTSGGGRGRRPK) are disordered. A compositionally biased stretch (basic residues) spans 368–385 (ANNKKAKTSGGGRGRRPK).

Belongs to the XPG/RAD2 endonuclease family. FEN1 subfamily. In terms of assembly, interacts with PCNA. Three molecules of FEN1 bind to one PCNA trimer with each molecule binding to one PCNA monomer. PCNA stimulates the nuclease activity without altering cleavage specificity. Mg(2+) is required as a cofactor. Phosphorylated. Phosphorylation upon DNA damage induces relocalization to the nuclear plasma.

The protein resides in the nucleus. It is found in the nucleolus. Its subcellular location is the nucleoplasm. The protein localises to the mitochondrion. In terms of biological role, structure-specific nuclease with 5'-flap endonuclease and 5'-3' exonuclease activities involved in DNA replication and repair. During DNA replication, cleaves the 5'-overhanging flap structure that is generated by displacement synthesis when DNA polymerase encounters the 5'-end of a downstream Okazaki fragment. It enters the flap from the 5'-end and then tracks to cleave the flap base, leaving a nick for ligation. Also involved in the long patch base excision repair (LP-BER) pathway, by cleaving within the apurinic/apyrimidinic (AP) site-terminated flap. Acts as a genome stabilization factor that prevents flaps from equilibrating into structures that lead to duplications and deletions. Also possesses 5'-3' exonuclease activity on nicked or gapped double-stranded DNA, and exhibits RNase H activity. Also involved in replication and repair of rDNA and in repairing mitochondrial DNA. In Drosophila melanogaster (Fruit fly), this protein is Flap endonuclease 1.